The following is a 311-amino-acid chain: 4-hydroxy-3-methylbut-2-enyl diphosphate reductase (311 aa).

Cys-12 lines the [4Fe-4S] cluster pocket. (2E)-4-hydroxy-3-methylbut-2-enyl diphosphate is bound by residues His-41 and His-74. Residues His-41 and His-74 each contribute to the dimethylallyl diphosphate site. Residues His-41 and His-74 each coordinate isopentenyl diphosphate. Cys-96 is a binding site for [4Fe-4S] cluster. Residue His-124 coordinates (2E)-4-hydroxy-3-methylbut-2-enyl diphosphate. His-124 provides a ligand contact to dimethylallyl diphosphate. His-124 contributes to the isopentenyl diphosphate binding site. The active-site Proton donor is the Glu-126. A (2E)-4-hydroxy-3-methylbut-2-enyl diphosphate-binding site is contributed by Thr-168. Cys-198 is a [4Fe-4S] cluster binding site. The (2E)-4-hydroxy-3-methylbut-2-enyl diphosphate site is built by Ser-226, Ser-227, Asn-228, and Ser-270. Residues Ser-226, Ser-227, Asn-228, and Ser-270 each contribute to the dimethylallyl diphosphate site. Residues Ser-226, Ser-227, Asn-228, and Ser-270 each contribute to the isopentenyl diphosphate site.

This sequence belongs to the IspH family. [4Fe-4S] cluster is required as a cofactor.

The catalysed reaction is isopentenyl diphosphate + 2 oxidized [2Fe-2S]-[ferredoxin] + H2O = (2E)-4-hydroxy-3-methylbut-2-enyl diphosphate + 2 reduced [2Fe-2S]-[ferredoxin] + 2 H(+). The enzyme catalyses dimethylallyl diphosphate + 2 oxidized [2Fe-2S]-[ferredoxin] + H2O = (2E)-4-hydroxy-3-methylbut-2-enyl diphosphate + 2 reduced [2Fe-2S]-[ferredoxin] + 2 H(+). Its pathway is isoprenoid biosynthesis; dimethylallyl diphosphate biosynthesis; dimethylallyl diphosphate from (2E)-4-hydroxy-3-methylbutenyl diphosphate: step 1/1. The protein operates within isoprenoid biosynthesis; isopentenyl diphosphate biosynthesis via DXP pathway; isopentenyl diphosphate from 1-deoxy-D-xylulose 5-phosphate: step 6/6. In terms of biological role, catalyzes the conversion of 1-hydroxy-2-methyl-2-(E)-butenyl 4-diphosphate (HMBPP) into a mixture of isopentenyl diphosphate (IPP) and dimethylallyl diphosphate (DMAPP). Acts in the terminal step of the DOXP/MEP pathway for isoprenoid precursor biosynthesis. The chain is 4-hydroxy-3-methylbut-2-enyl diphosphate reductase from Alcanivorax borkumensis (strain ATCC 700651 / DSM 11573 / NCIMB 13689 / SK2).